Reading from the N-terminus, the 171-residue chain is Protein phosphatase 1 regulatory subunit 1A (171 aa).

M1 carries the post-translational modification N-acetylmethionine. Positions M1 to V171 are disordered. The interval K9–F12 is essential for activity. Residues P19–I29 show a composition bias toward basic and acidic residues. The residue at position 35 (T35) is a Phosphothreonine; by PKA. Residues T42–R54 form an essential for activity region. Phosphoserine occurs at positions 43, 46, 47, and 67. Residues K135–S157 are compositionally biased toward basic and acidic residues. The interaction with PPP1R15A stretch occupies residues T143 to V171.

Belongs to the protein phosphatase inhibitor 1 family. Interacts with PPP1R15A. In terms of processing, phosphorylation of Thr-35 is required for activity.

In terms of biological role, inhibitor of protein-phosphatase 1. This protein may be important in hormonal control of glycogen metabolism. Hormones that elevate intracellular cAMP increase I-1 activity in many tissues. I-1 activation may impose cAMP control over proteins that are not directly phosphorylated by PKA. Following a rise in intracellular calcium, I-1 is inactivated by calcineurin (or PP2B). Does not inhibit type-2 phosphatases. The protein is Protein phosphatase 1 regulatory subunit 1A (PPP1R1A) of Homo sapiens (Human).